The sequence spans 136 residues: Histone H2B.5 (136 aa).

Positions methionine 1–aspartate 36 are enriched in basic and acidic residues. Residues methionine 1–lysine 44 are disordered. N6-acetyllysine is present on residues lysine 7 and lysine 26. Lysine 132 is covalently cross-linked (Glycyl lysine isopeptide (Lys-Gly) (interchain with G-Cter in ubiquitin)).

Belongs to the histone H2B family. As to quaternary structure, the nucleosome is a histone octamer containing two molecules each of H2A, H2B, H3 and H4 assembled in one H3-H4 heterotetramer and two H2A-H2B heterodimers. The octamer wraps approximately 147 bp of DNA. Can be acetylated to form H2BK6ac and H2BK33ac. In terms of processing, monoubiquitinated to form H2BK143ub1; may give a specific tag for epigenetic transcriptional activation.

The protein localises to the nucleus. The protein resides in the chromosome. Core component of nucleosome. Nucleosomes wrap and compact DNA into chromatin, limiting DNA accessibility to the cellular machineries which require DNA as a template. Histones thereby play a central role in transcription regulation, DNA repair, DNA replication and chromosomal stability. DNA accessibility is regulated via a complex set of post-translational modifications of histones, also called histone code, and nucleosome remodeling. This is Histone H2B.5 from Triticum aestivum (Wheat).